The following is a 534-amino-acid chain: NAD(P)H-quinone oxidoreductase chain 4 (534 aa).

14 helical membrane-spanning segments follow: residues 12 to 32 (FPWLSASILFPIGSALVIPFF), 44 to 64 (FALSIALITFLITVGSYINGF), 96 to 116 (MPLILLTSFITALAVLAAWPV), 120 to 140 (PKLFFFLILVMDGGQIAVFAV), 144 to 164 (LLFFLTWELELIPVYLLLAIW), 176 to 196 (FIIYTAGSSIFILLAALAMGF), 220 to 240 (ILCYVGLLIAFGVKLPIVPLH), 251 to 271 (TAPVHMLLAGILLKMGGYALL), 285 to 305 (FAPLLIVLGVVNIIYAALTSF), 314 to 334 (IAYSSISHMGFVLIGIGSFSS), 340 to 360 (AMLQMVSHGLIGASLFFLVGA), 384 to 404 (FALWTACSLASLALPGMSGFV), 425 to 445 (VVMASLAAIGVILTPIYLLSM), and 472 to 492 (VYIIACLLLPIIGIGLYPRLV).

This sequence belongs to the complex I subunit 4 family.

It localises to the cellular thylakoid membrane. It catalyses the reaction a plastoquinone + NADH + (n+1) H(+)(in) = a plastoquinol + NAD(+) + n H(+)(out). The catalysed reaction is a plastoquinone + NADPH + (n+1) H(+)(in) = a plastoquinol + NADP(+) + n H(+)(out). In terms of biological role, NDH-1 shuttles electrons from NAD(P)H, via FMN and iron-sulfur (Fe-S) centers, to quinones in the respiratory chain. The immediate electron acceptor for the enzyme in this species is believed to be plastoquinone. Couples the redox reaction to proton translocation (for every two electrons transferred, four hydrogen ions are translocated across the cytoplasmic membrane), and thus conserves the redox energy in a proton gradient. The polypeptide is NAD(P)H-quinone oxidoreductase chain 4 (Prochlorococcus marinus (strain MIT 9215)).